A 178-amino-acid polypeptide reads, in one-letter code: Riboflavin kinase (178 aa).

Positions 39 and 41 each coordinate Mg(2+). Glu116 serves as the catalytic Nucleophile.

The protein belongs to the flavokinase family. It depends on Zn(2+) as a cofactor. Mg(2+) serves as cofactor.

It carries out the reaction riboflavin + ATP = FMN + ADP + H(+). The protein operates within cofactor biosynthesis; FMN biosynthesis; FMN from riboflavin (ATP route): step 1/1. Its function is as follows. Catalyzes the phosphorylation of riboflavin (vitamin B2) to form flavin mononucleotide (FMN) coenzyme. The chain is Riboflavin kinase (FMN1) from Scheffersomyces stipitis (strain ATCC 58785 / CBS 6054 / NBRC 10063 / NRRL Y-11545) (Yeast).